The chain runs to 663 residues: Protein associated with UVRAG as autophagy enhancer (663 aa).

Disordered stretches follow at residues 1-36 and 65-136; these read MVSQ…LDTE and DASP…EERA. Polar residues-rich tracts occupy residues 80–93 and 105–130; these read TASN…TSPL and PKGT…SSVT. Residues 196–235 are interaction with UVRAG; that stretch reads EAFVLPVDAEKENAHFYVADMIISVMEKMKCNILSQQHTE. N6-acetyllysine is present on residues lysine 484, lysine 534, lysine 574, and lysine 634.

Interacts with UVRAG; the interaction is direct and promotes association with the PI3K/PI3KC3 and HOPS complexes. Interacts with STX17. In terms of processing, acetylated by KAT5/TIP60 under autophagy induction, promoting autophagosome maturation and lipid metabolism. Lys-484 and Lys-574 constitute the key sites for tuning function in autophagy.

It localises to the cytoplasmic vesicle. It is found in the autophagosome membrane. Regulator of autophagy that promotes autophagosome maturation by facilitating the biogenesis of phosphatidylinositol 3-phosphate (PtdIns(3)P) in late steps of autophagy. Acts by antagonizing RUBCN, thereby stimulating phosphatidylinositol 3-kinase activity of the PI3K/PI3KC3 complex. Following anchorage to the autophagosomal SNARE STX17, promotes the recruitment of PI3K/PI3KC3 and HOPS complexes to the autophagosome to regulate the fusion specificity of autophagosomes with late endosomes/lysosomes. Binds phosphoinositides phosphatidylinositol 3-phosphate (PtdIns(3)P), 4-phosphate (PtdIns(4)P) and 5-phosphate (PtdIns(5)P). In addition to its role in autophagy, acts as a regulator of lipid and glycogen homeostasis. May act as a tumor suppressor. The chain is Protein associated with UVRAG as autophagy enhancer from Bos taurus (Bovine).